A 123-amino-acid polypeptide reads, in one-letter code: ATP synthase epsilon chain (123 aa).

It belongs to the ATPase epsilon chain family. F-type ATPases have 2 components, CF(1) - the catalytic core - and CF(0) - the membrane proton channel. CF(1) has five subunits: alpha(3), beta(3), gamma(1), delta(1), epsilon(1). CF(0) has three main subunits: a, b and c.

It localises to the cell inner membrane. Functionally, produces ATP from ADP in the presence of a proton gradient across the membrane. In Helicobacter acinonychis (strain Sheeba), this protein is ATP synthase epsilon chain.